The chain runs to 295 residues: Glutamyl-Q tRNA(Asp) synthetase (295 aa).

Residues 5–9 and Glu-41 contribute to the L-glutamate site; that span reads RFAPS. Residues 8–18 carry the 'HIGH' region motif; sequence PSPTGLLHIGS. Zn(2+) contacts are provided by Cys-97, Cys-99, Tyr-117, and Cys-121. 2 residues coordinate L-glutamate: Tyr-178 and Arg-196. A 'KMSKS' region motif is present at residues 234-238; sequence KWSKQ. Lys-237 is an ATP binding site.

Belongs to the class-I aminoacyl-tRNA synthetase family. GluQ subfamily. The cofactor is Zn(2+).

Functionally, catalyzes the tRNA-independent activation of glutamate in presence of ATP and the subsequent transfer of glutamate onto a tRNA(Asp). Glutamate is transferred on the 2-amino-5-(4,5-dihydroxy-2-cyclopenten-1-yl) moiety of the queuosine in the wobble position of the QUC anticodon. The protein is Glutamyl-Q tRNA(Asp) synthetase of Neisseria gonorrhoeae (strain ATCC 700825 / FA 1090).